Consider the following 484-residue polypeptide: tRNA sulfurtransferase (484 aa).

The THUMP domain occupies 63-167; that stretch reads ELFAERLAHI…RDKLYMVSQR (105 aa). ATP is bound by residues 185 to 186, lysine 267, glycine 289, and glutamine 298; that span reads LI. Cysteine 346 and cysteine 458 form a disulfide bridge. The Rhodanese domain occupies 406 to 484; sequence AAGNEVIIDI…GYNNVKVYRP (79 aa). Catalysis depends on cysteine 458, which acts as the Cysteine persulfide intermediate.

The protein belongs to the ThiI family.

The protein localises to the cytoplasm. The catalysed reaction is [ThiI sulfur-carrier protein]-S-sulfanyl-L-cysteine + a uridine in tRNA + 2 reduced [2Fe-2S]-[ferredoxin] + ATP + H(+) = [ThiI sulfur-carrier protein]-L-cysteine + a 4-thiouridine in tRNA + 2 oxidized [2Fe-2S]-[ferredoxin] + AMP + diphosphate. The enzyme catalyses [ThiS sulfur-carrier protein]-C-terminal Gly-Gly-AMP + S-sulfanyl-L-cysteinyl-[cysteine desulfurase] + AH2 = [ThiS sulfur-carrier protein]-C-terminal-Gly-aminoethanethioate + L-cysteinyl-[cysteine desulfurase] + A + AMP + 2 H(+). Its pathway is cofactor biosynthesis; thiamine diphosphate biosynthesis. Its function is as follows. Catalyzes the ATP-dependent transfer of a sulfur to tRNA to produce 4-thiouridine in position 8 of tRNAs, which functions as a near-UV photosensor. Also catalyzes the transfer of sulfur to the sulfur carrier protein ThiS, forming ThiS-thiocarboxylate. This is a step in the synthesis of thiazole, in the thiamine biosynthesis pathway. The sulfur is donated as persulfide by IscS. The chain is tRNA sulfurtransferase from Shewanella amazonensis (strain ATCC BAA-1098 / SB2B).